The following is a 459-amino-acid chain: Bifunctional protein GlmU (459 aa).

Residues 1 to 229 form a pyrophosphorylase region; that stretch reads MTNYAIILAA…FDESLGVNDR (229 aa). UDP-N-acetyl-alpha-D-glucosamine is bound by residues 8-11, Lys-22, Gln-72, and 77-78; these read LAAG and GT. Asp-102 lines the Mg(2+) pocket. Residues Gly-139, Glu-154, Asn-169, and Asn-227 each contribute to the UDP-N-acetyl-alpha-D-glucosamine site. Mg(2+) is bound at residue Asn-227. Residues 230 to 250 form a linker region; sequence VALATAESVMRRRINQQHMVN. The segment at 251-459 is N-acetyltransferase; that stretch reads GVSFVNPHAT…KRLPHHPQNK (209 aa). Residues Arg-332 and Lys-350 each contribute to the UDP-N-acetyl-alpha-D-glucosamine site. His-362 (proton acceptor) is an active-site residue. Positions 365 and 376 each coordinate UDP-N-acetyl-alpha-D-glucosamine. Residues Ala-379, 385–386, Ser-404, Ala-422, and Arg-439 contribute to the acetyl-CoA site; that span reads NY.

This sequence in the N-terminal section; belongs to the N-acetylglucosamine-1-phosphate uridyltransferase family. In the C-terminal section; belongs to the transferase hexapeptide repeat family. In terms of assembly, homotrimer. Mg(2+) is required as a cofactor.

The protein localises to the cytoplasm. The enzyme catalyses alpha-D-glucosamine 1-phosphate + acetyl-CoA = N-acetyl-alpha-D-glucosamine 1-phosphate + CoA + H(+). It catalyses the reaction N-acetyl-alpha-D-glucosamine 1-phosphate + UTP + H(+) = UDP-N-acetyl-alpha-D-glucosamine + diphosphate. It functions in the pathway nucleotide-sugar biosynthesis; UDP-N-acetyl-alpha-D-glucosamine biosynthesis; N-acetyl-alpha-D-glucosamine 1-phosphate from alpha-D-glucosamine 6-phosphate (route II): step 2/2. It participates in nucleotide-sugar biosynthesis; UDP-N-acetyl-alpha-D-glucosamine biosynthesis; UDP-N-acetyl-alpha-D-glucosamine from N-acetyl-alpha-D-glucosamine 1-phosphate: step 1/1. The protein operates within bacterial outer membrane biogenesis; LPS lipid A biosynthesis. Catalyzes the last two sequential reactions in the de novo biosynthetic pathway for UDP-N-acetylglucosamine (UDP-GlcNAc). The C-terminal domain catalyzes the transfer of acetyl group from acetyl coenzyme A to glucosamine-1-phosphate (GlcN-1-P) to produce N-acetylglucosamine-1-phosphate (GlcNAc-1-P), which is converted into UDP-GlcNAc by the transfer of uridine 5-monophosphate (from uridine 5-triphosphate), a reaction catalyzed by the N-terminal domain. The polypeptide is Bifunctional protein GlmU (Streptococcus sanguinis (strain SK36)).